The following is a 216-amino-acid chain: Thylakoid lumenal 16.5 kDa protein, chloroplastic (216 aa).

Residues 1-38 constitute a chloroplast transit peptide; sequence MAKSLLCSSTLNPFFSTTLSSSKKNQIAYSGNSKNQTS. Residues 39 to 73 constitute a thylakoid transit peptide; it reads SSLLWKRRELSLGFMSSLVAIGLVSNDRRRHDANA.

It localises to the plastid. The protein localises to the chloroplast thylakoid lumen. The sequence is that of Thylakoid lumenal 16.5 kDa protein, chloroplastic from Arabidopsis thaliana (Mouse-ear cress).